A 147-amino-acid chain; its full sequence is Large ribosomal subunit protein uL13 (147 aa).

It belongs to the universal ribosomal protein uL13 family. In terms of assembly, part of the 50S ribosomal subunit.

Functionally, this protein is one of the early assembly proteins of the 50S ribosomal subunit, although it is not seen to bind rRNA by itself. It is important during the early stages of 50S assembly. This chain is Large ribosomal subunit protein uL13, found in Latilactobacillus sakei subsp. sakei (strain 23K) (Lactobacillus sakei subsp. sakei).